The following is a 93-amino-acid chain: Acylphosphatase (93 aa).

A disulfide bond links Cys-5 and Cys-49. Residues Cys-5 to Tyr-93 enclose the Acylphosphatase-like domain. Asn-38 is a catalytic residue.

It belongs to the acylphosphatase family.

It carries out the reaction an acyl phosphate + H2O = a carboxylate + phosphate + H(+). The protein is Acylphosphatase of Salmonella paratyphi A (strain ATCC 9150 / SARB42).